Consider the following 320-residue polypeptide: tRNA N6-adenosine threonylcarbamoyltransferase (320 aa).

Positions 113 and 117 each coordinate Fe cation. Substrate-binding positions include 143 to 147 (VVSGG), aspartate 176, glycine 189, aspartate 193, and asparagine 281. Fe cation is bound at residue aspartate 305.

It belongs to the KAE1 / TsaD family. The cofactor is Fe(2+).

The protein resides in the cytoplasm. It carries out the reaction L-threonylcarbamoyladenylate + adenosine(37) in tRNA = N(6)-L-threonylcarbamoyladenosine(37) in tRNA + AMP + H(+). Its function is as follows. Required for the formation of a threonylcarbamoyl group on adenosine at position 37 (t(6)A37) in tRNAs that read codons beginning with adenine. Is involved in the transfer of the threonylcarbamoyl moiety of threonylcarbamoyl-AMP (TC-AMP) to the N6 group of A37, together with TsaE and TsaB. TsaD likely plays a direct catalytic role in this reaction. This is tRNA N6-adenosine threonylcarbamoyltransferase from Mycoplasmoides gallisepticum (strain R(low / passage 15 / clone 2)) (Mycoplasma gallisepticum).